The chain runs to 342 residues: MAGDEPLPGDGQRRRYLIGYALAPKKQQSFIQPSLVSRAAGRGMDLVPVDPSRPLPEQGPFHLLIHKLYGEEWRGQLDAFSAAHPAVPVVDPPHAIDRLHNRISMLQVVSELDVPLHAHHHHTFGIPSQVVVYDAAALSDSGLLAALRFPLIAKPLVADGTAKSHKMSLVYHREGLRKLRPPLVLQEFVNHGGVIFKVYVVGAHVTCVKRRSLPDVSSDVLQDASAEGSLSFSQVSNLPNERTAQEYYDDMRLEDAIMPPTAFINDIAAALRRALGLHLFNFDMIRDARAGDRYLVIDINYFPGYAKMPGYETVLTDFFWEMVHKDDDTPNLNPNPNDEDVK.

K25 and K67 together coordinate 1D-myo-inositol 1,3,4-trisphosphate. Residues R102 and K154 each contribute to the ATP site. Residues H165 and K197 each contribute to the 1D-myo-inositol 1,3,4-trisphosphate site. Residues 186 to 197 and S212 contribute to the ATP site; that span reads QEFVNHGGVIFK. 3 residues coordinate Mg(2+): D283, D298, and N300. Residue N300 participates in 1D-myo-inositol 1,3,4-trisphosphate binding.

Belongs to the ITPK1 family. Monomer. It depends on Mg(2+) as a cofactor. As to expression, expressed in roots, leaves, flowers, anthers and embryos.

The enzyme catalyses 1D-myo-inositol 3,4,5,6-tetrakisphosphate + ATP = 1D-myo-inositol 1,3,4,5,6-pentakisphosphate + ADP + H(+). The catalysed reaction is 1D-myo-inositol 1,3,4-trisphosphate + ATP = 1D-myo-inositol 1,3,4,5-tetrakisphosphate + ADP + H(+). It carries out the reaction 1D-myo-inositol 1,3,4-trisphosphate + ATP = 1D-myo-inositol 1,3,4,6-tetrakisphosphate + ADP + H(+). In terms of biological role, kinase that can phosphorylate various inositol polyphosphate such as Ins(3,4,5,6)P4 or Ins(1,3,4)P3 and participates in phytic acid biosynthesis in developing seeds. Phytic acid is the primary storage form of phosphorus in cereal grains and other plant seeds. The sequence is that of Inositol-tetrakisphosphate 1-kinase 5 (ITPK5) from Oryza sativa subsp. japonica (Rice).